Here is a 322-residue protein sequence, read N- to C-terminus: Nuclease 1, mitochondrial (322 aa).

H142 acts as the Proton acceptor in catalysis. N174 lines the Mg(2+) pocket.

The protein belongs to the DNA/RNA non-specific endonuclease family. Homodimer. Mn(2+) serves as cofactor. The cofactor is Mg(2+).

It is found in the mitochondrion inner membrane. Functionally, this enzyme has both RNase and DNase activity. It degrades single-stranded DNA and RNA. The sequence is that of Nuclease 1, mitochondrial (pnu1) from Schizosaccharomyces pombe (strain 972 / ATCC 24843) (Fission yeast).